Here is a 214-residue protein sequence, read N- to C-terminus: Adenylate kinase (214 aa).

14–19 (GSGKGT) contributes to the ATP binding site. The interval 32–61 (SVGKVLRTVMESNTAEADVVKKFIKSGKLV) is NMP. AMP contacts are provided by residues Arg38, 59–61 (KLV), 87–90 (GYPR), and Gln94. The tract at residues 124-162 (GRISCTDCGTIYNKLYCMPKINGVCDICNSSSFQNRVDD) is LID. Arg125 lines the ATP pocket. Residues Cys128 and Cys131 each contribute to the Zn(2+) site. 134–135 (IY) is an ATP binding site. Residues Cys148 and Cys151 each coordinate Zn(2+). Residues Arg159 and Arg170 each contribute to the AMP site. Residue Gln198 coordinates ATP.

The protein belongs to the adenylate kinase family. In terms of assembly, monomer.

The protein localises to the cytoplasm. The catalysed reaction is AMP + ATP = 2 ADP. It participates in purine metabolism; AMP biosynthesis via salvage pathway; AMP from ADP: step 1/1. In terms of biological role, catalyzes the reversible transfer of the terminal phosphate group between ATP and AMP. Plays an important role in cellular energy homeostasis and in adenine nucleotide metabolism. In Orientia tsutsugamushi (strain Ikeda) (Rickettsia tsutsugamushi), this protein is Adenylate kinase.